The chain runs to 137 residues: Small ribosomal subunit protein uS9 (137 aa).

Residues 105 to 117 (LKIEGHLSRDPRA) are compositionally biased toward basic and acidic residues. A disordered region spans residues 105 to 137 (LKIEGHLSRDPRAKERRKYGLKKARKAPQFSKR). Positions 118–137 (KERRKYGLKKARKAPQFSKR) are enriched in basic residues.

It belongs to the universal ribosomal protein uS9 family.

This is Small ribosomal subunit protein uS9 from Prochlorococcus marinus (strain MIT 9211).